Consider the following 175-residue polypeptide: Ferritin light chain (175 aa).

Position 2 is an N-acetylserine (serine 2). One can recognise a Ferritin-like diiron domain in the interval 7–156; it reads QNYSTEVEAA…DHLTNLRRLS (150 aa). Fe cation is bound by residues glutamate 54, glutamate 57, glutamate 58, glutamate 61, and glutamate 64.

Belongs to the ferritin family. As to quaternary structure, oligomer of 24 subunits. There are two types of subunits: L (light) chain and H (heavy) chain. The major chain can be light or heavy, depending on the species and tissue type. The functional molecule forms a roughly spherical shell with a diameter of 12 nm and contains a central cavity into which the insoluble mineral iron core is deposited. Interacts with NCOA4.

The protein localises to the cytoplasmic vesicle. Its subcellular location is the autophagosome. It is found in the cytoplasm. It localises to the autolysosome. In terms of biological role, stores iron in a soluble, non-toxic, readily available form. Important for iron homeostasis. Iron is taken up in the ferrous form and deposited as ferric hydroxides after oxidation. Also plays a role in delivery of iron to cells. Mediates iron uptake in capsule cells of the developing kidney. Delivery to lysosomes by the cargo receptor NCOA4 for autophagic degradation and release or iron. This chain is Ferritin light chain (FTL), found in Felis catus (Cat).